Here is a 215-residue protein sequence, read N- to C-terminus: Pyrrolidone-carboxylate peptidase (215 aa).

Active-site residues include Glu80, Cys143, and His167.

The protein belongs to the peptidase C15 family. As to quaternary structure, homotetramer.

The protein localises to the cytoplasm. The catalysed reaction is Release of an N-terminal pyroglutamyl group from a polypeptide, the second amino acid generally not being Pro.. Its function is as follows. Removes 5-oxoproline from various penultimate amino acid residues except L-proline. The sequence is that of Pyrrolidone-carboxylate peptidase from Bacillus cereus (strain B4264).